Consider the following 424-residue polypeptide: UDP-N-acetylglucosamine 1-carboxyvinyltransferase (424 aa).

Phosphoenolpyruvate is bound at residue 22–23 (KN). Position 98 (Arg98) interacts with UDP-N-acetyl-alpha-D-glucosamine. Catalysis depends on Cys122, which acts as the Proton donor. 2-(S-cysteinyl)pyruvic acid O-phosphothioketal is present on Cys122. UDP-N-acetyl-alpha-D-glucosamine-binding positions include 127–131 (RPVDQ), Asp312, and Ile334.

Belongs to the EPSP synthase family. MurA subfamily.

Its subcellular location is the cytoplasm. The catalysed reaction is phosphoenolpyruvate + UDP-N-acetyl-alpha-D-glucosamine = UDP-N-acetyl-3-O-(1-carboxyvinyl)-alpha-D-glucosamine + phosphate. Its pathway is cell wall biogenesis; peptidoglycan biosynthesis. Cell wall formation. Adds enolpyruvyl to UDP-N-acetylglucosamine. This Xanthomonas euvesicatoria pv. vesicatoria (strain 85-10) (Xanthomonas campestris pv. vesicatoria) protein is UDP-N-acetylglucosamine 1-carboxyvinyltransferase.